Here is a 164-residue protein sequence, read N- to C-terminus: Large ribosomal subunit protein uL11 (164 aa).

The protein belongs to the universal ribosomal protein uL11 family. In terms of assembly, part of the ribosomal stalk of the 50S ribosomal subunit. Interacts with L10 and the large rRNA to form the base of the stalk. L10 forms an elongated spine to which L12 dimers bind in a sequential fashion forming a multimeric L10(L12)X complex.

Functionally, forms part of the ribosomal stalk which helps the ribosome interact with GTP-bound translation factors. The protein is Large ribosomal subunit protein uL11 of Pyrococcus horikoshii (strain ATCC 700860 / DSM 12428 / JCM 9974 / NBRC 100139 / OT-3).